The following is a 695-amino-acid chain: Lupanine 17-hydroxylase [cytochrome c] (695 aa).

The first 26 residues, M1–A26, serve as a signal peptide directing secretion. The Cytochrome c domain maps to A598–A677. Positions 612, 615, and 616 each coordinate heme c.

It belongs to the bacterial PQQ dehydrogenase family. In terms of assembly, monomer. It depends on pyrroloquinoline quinone as a cofactor. The cofactor is heme c.

The protein resides in the periplasm. It carries out the reaction lupanine + 2 Fe(III)-[cytochrome c] + H2O = 17-hydroxylupanine + 2 Fe(II)-[cytochrome c] + 2 H(+). Its function is as follows. Catalyzes the first reaction in the catabolism of the alkaloid lupanine. It dehydrogenates lupanine, which can then be hydrated to produce 17-hydroxylupanine. This chain is Lupanine 17-hydroxylase [cytochrome c] (luh), found in Pseudomonas sp.